A 578-amino-acid polypeptide reads, in one-letter code: MPKIKRLPDEVIKKIAAGEVVERPYSVVKELVENSLDAKAQNINVYIEEGGLGKIVVEDDGIGIPPEELPDALLRHTTSKIASFDDLYYLESFGFRGEALYSIAAVSKISIKSRVRGENNGYELIAHAGEVINLTEVGMAYGTVVTVSDLFFNTPARKKFLKSGQTEAGLIRQFIEKMAILYPGVKFSLFIDGKKIYSSAGIQEQLGLLARFWGLEKGNLLMLEEKLGEGFFIKGGIALPPAGKPHRKLQVFAVNKRLVKSGILTKAIDDAYESLLPTGLKPLVFLEVVVPGTWVDVNVHPQKLEVKFMDEQKIYLDVRTIIRNKLVNAKSSSLKSFSPARETNTKSEDNDYWQVTYFAEEFSGNSDKLLEKEDIFSTSDNLTFSLNKDFAKELNFQVIGQFSLKYIIVEKNDKLLIIDQHAAHERILYEKYQTKLNPFYSQVLTFPVRIKASPELEAFLQENYQNFLEIGLHIEPFGPGEYLVREIPEDFPQNNIANVLEEYLYEIMEQKEQVSFREKALKLFACKNAVKFGEKLTYSEMTNLVKELFKTNYPLSCPHGRPTIYELSLTEINKKFFR.

This sequence belongs to the DNA mismatch repair MutL/HexB family.

Functionally, this protein is involved in the repair of mismatches in DNA. It is required for dam-dependent methyl-directed DNA mismatch repair. May act as a 'molecular matchmaker', a protein that promotes the formation of a stable complex between two or more DNA-binding proteins in an ATP-dependent manner without itself being part of a final effector complex. The protein is DNA mismatch repair protein MutL of Carboxydothermus hydrogenoformans (strain ATCC BAA-161 / DSM 6008 / Z-2901).